The following is a 97-amino-acid chain: Large ribosomal subunit protein eL21 (97 aa).

The disordered stretch occupies residues 1-26; sequence MQKSEGFRSKTRYKLQKHPRQKGMAP. Basic residues predominate over residues 9–21; that stretch reads SKTRYKLQKHPRQ.

The protein belongs to the eukaryotic ribosomal protein eL21 family.

The chain is Large ribosomal subunit protein eL21 from Methanococcus maripaludis (strain C6 / ATCC BAA-1332).